A 984-amino-acid polypeptide reads, in one-letter code: Ephrin type-B receptor 1 (984 aa).

The N-terminal stretch at 1–17 is a signal peptide; that stretch reads MALDCLLLFLLASAVAA. Residues 18–540 lie on the Extracellular side of the membrane; that stretch reads MEETLMDTRT…YKSELREQLP (523 aa). The Eph LBD domain occupies 19-201; that stretch reads EETLMDTRTA…FFKKCPSIVQ (183 aa). 2 consecutive Fibronectin type-III domains span residues 322-432 and 433-528; these read VPSG…TNQA and APST…TLTD. N334, N426, and N480 each carry an N-linked (GlcNAc...) asparagine glycan. A helical membrane pass occupies residues 541-563; it reads LIAGSAAAGVVFVVSLVAISIVC. The Cytoplasmic portion of the chain corresponds to 564-984; the sequence is SRKRAYSKEA…QMNQSPSVMA (421 aa). Y600 is subject to Phosphotyrosine. In terms of domain architecture, Protein kinase spans 619 to 882; that stretch reads VKIEEVIGAG…EIVNTLDKMI (264 aa). ATP-binding positions include 625 to 633 and K651; that span reads IGAGEFGEV. D744 acts as the Proton acceptor in catalysis. In terms of domain architecture, SAM spans 911–975; sequence TAFTTVDDWL…LSSIHSMRVQ (65 aa). Y928 is subject to Phosphotyrosine; by autocatalysis. Positions 982–984 match the PDZ-binding motif; the sequence is VMA.

This sequence belongs to the protein kinase superfamily. Tyr protein kinase family. Ephrin receptor subfamily. As to quaternary structure, heterotetramer upon binding of the ligand. The heterotetramer is composed of an ephrin dimer and a receptor dimer. Oligomerization is probably required to induce biological responses. Interacts with EPHB6; transphosphorylates EPHB6 to form an active signaling complex. Interacts with PICK1. Interacts (through Tyr-594) with NCK1 (via SH2 domain); activates the JUN cascade to regulate cell adhesion. The ligand-activated form interacts (through Tyr-928) with GRB7 and GRB10 (via SH2 domains). The ligand-activated form interacts (residues within the catalytic domain) with GRB2 (via SH2 domain). Interacts with GRB2, SHC1 and SRC; activates the MAPK/ERK cascade to regulate cell migration. Interacts with CBL; regulates receptor degradation through ubiquitination. Interacts with ACP1. In terms of processing, phosphorylated. Autophosphorylation is stimulated by the ligand EFNB1. Required for interaction with SH2 domain-containing interactors, for activation of the MAPK/ERK and JUN signaling cascades and for ubiquitination by CBL. Ubiquitinated; (EFNB1)ligand-induced poly- and/or multi-ubiquitination by CBL is regulated by SRC and leads to lysosomal degradation. Expressed in neural stem and progenitor cells in the dentate gyrus. Expressed in myogenic progenitor cells.

The protein localises to the cell membrane. It localises to the early endosome membrane. Its subcellular location is the cell projection. It is found in the dendrite. It carries out the reaction L-tyrosyl-[protein] + ATP = O-phospho-L-tyrosyl-[protein] + ADP + H(+). Its function is as follows. Receptor tyrosine kinase which binds promiscuously transmembrane ephrin-B family ligands residing on adjacent cells, leading to contact-dependent bidirectional signaling into neighboring cells. The signaling pathway downstream of the receptor is referred to as forward signaling while the signaling pathway downstream of the ephrin ligand is referred to as reverse signaling. Cognate/functional ephrin ligands for this receptor include EFNB1, EFNB2 and EFNB3. During nervous system development, regulates retinal axon guidance redirecting ipsilaterally ventrotemporal retinal ganglion cells axons at the optic chiasm midline. This probably requires repulsive interaction with EFNB2. In the adult nervous system together with EFNB3, regulates chemotaxis, proliferation and polarity of the hippocampus neural progenitors. In addition to its role in axon guidance also plays an important redundant role with other ephrin-B receptors in development and maturation of dendritic spines and synapse formation. May also regulate angiogenesis. More generally, may play a role in targeted cell migration and adhesion. Upon activation by EFNB1 and probably other ephrin-B ligands activates the MAPK/ERK and the JNK signaling cascades to regulate cell migration and adhesion respectively. Involved in the maintenance of the pool of satellite cells (muscle stem cells) by promoting their self-renewal and reducing their activation and differentiation. This is Ephrin type-B receptor 1 (Ephb1) from Mus musculus (Mouse).